A 335-amino-acid polypeptide reads, in one-letter code: 3-hydroxyisobutyrate dehydrogenase, mitochondrial (335 aa).

The N-terminal 35 residues, 1 to 35 (MAASLGFRGAASGLRYWSGRRRPVGSLAAVCSRSM), are a transit peptide targeting the mitochondrion. Residue 39 to 68 (TPVGFIGLGNMGNPMAKNLIKHGYPLILYD) coordinates NAD(+). Residues Lys-59 and Lys-75 each carry the N6-acetyllysine; alternate modification. N6-succinyllysine; alternate occurs at positions 59 and 75. At Lys-94 the chain carries N6-succinyllysine. Residues 102 to 103 (LP) and Asn-107 contribute to the NAD(+) site. Lys-120 is modified (N6-acetyllysine). Thr-133 provides a ligand contact to NAD(+). Lys-140 is subject to N6-succinyllysine. Lys-144 is modified (N6-acetyllysine). Residue Lys-148 is modified to N6-acetyllysine; alternate. An N6-succinyllysine; alternate modification is found at Lys-148. The active site involves Lys-208. 2 positions are modified to N6-acetyllysine; alternate: Lys-237 and Lys-241. N6-succinyllysine; alternate occurs at positions 237 and 241. Lys-283 contributes to the NAD(+) binding site. Lys-296 bears the N6-succinyllysine mark. Position 320 is an N6-acetyllysine; alternate (Lys-320). The residue at position 320 (Lys-320) is an N6-succinyllysine; alternate.

This sequence belongs to the HIBADH-related family. 3-hydroxyisobutyrate dehydrogenase subfamily. In terms of assembly, homodimer. In terms of tissue distribution, higher level in kidney, liver, and heart than in muscle.

Its subcellular location is the mitochondrion. The enzyme catalyses 3-hydroxy-2-methylpropanoate + NAD(+) = 2-methyl-3-oxopropanoate + NADH + H(+). It participates in amino-acid degradation; L-valine degradation. The protein is 3-hydroxyisobutyrate dehydrogenase, mitochondrial (Hibadh) of Rattus norvegicus (Rat).